Reading from the N-terminus, the 434-residue chain is Serine hydroxymethyltransferase (434 aa).

(6S)-5,6,7,8-tetrahydrofolate is bound by residues L133 and G137–L139. The residue at position 242 (K242) is an N6-(pyridoxal phosphate)lysine.

It belongs to the SHMT family. Homodimer. Pyridoxal 5'-phosphate is required as a cofactor.

The protein resides in the cytoplasm. It catalyses the reaction (6R)-5,10-methylene-5,6,7,8-tetrahydrofolate + glycine + H2O = (6S)-5,6,7,8-tetrahydrofolate + L-serine. Its pathway is one-carbon metabolism; tetrahydrofolate interconversion. The protein operates within amino-acid biosynthesis; glycine biosynthesis; glycine from L-serine: step 1/1. Functionally, catalyzes the reversible interconversion of serine and glycine with tetrahydrofolate (THF) serving as the one-carbon carrier. This reaction serves as the major source of one-carbon groups required for the biosynthesis of purines, thymidylate, methionine, and other important biomolecules. Also exhibits THF-independent aldolase activity toward beta-hydroxyamino acids, producing glycine and aldehydes, via a retro-aldol mechanism. The sequence is that of Serine hydroxymethyltransferase from Hyphomicrobium methylovorum.